We begin with the raw amino-acid sequence, 329 residues long: BTB/POZ domain-containing adapter for CUL3-mediated RhoA degradation protein 1 (329 aa).

The segment covering Met1–Ser22 has biased composition (low complexity). The disordered stretch occupies residues Met1–Tyr31. Residues Lys41–Glu109 form the BTB domain. The interval Ala282–His303 is disordered.

This sequence belongs to the BACURD family. Homotetramer; forms a two-fold symmetric tetramer in solution. Interacts with CUL3; interaction is direct and forms a 5:5 heterodecamer. Component of the BCR(KCTD13) E3 ubiquitin ligase complex, at least composed of CUL3, KCTD13/BACURD1 and RBX1. Interacts with RHOA; with a preference for RhoA-GDP. Interacts with POLD2 and PCNA. Interacts with SPRTN. As to expression, expressed in a wide variety of tissues.

Its subcellular location is the nucleus. It participates in protein modification; protein ubiquitination. Substrate-specific adapter of a BCR (BTB-CUL3-RBX1) E3 ubiquitin-protein ligase complex required for synaptic transmission. The BCR(KCTD13) E3 ubiquitin ligase complex mediates the ubiquitination of RHOA, leading to its degradation by the proteasome Degradation of RHOA regulates the actin cytoskeleton and promotes synaptic transmission. The sequence is that of BTB/POZ domain-containing adapter for CUL3-mediated RhoA degradation protein 1 (KCTD13) from Homo sapiens (Human).